We begin with the raw amino-acid sequence, 313 residues long: tRNA uridine(34) hydroxylase (313 aa).

Positions 124–218 (SDPEVLLIDT…YLEEVPQEET (95 aa)) constitute a Rhodanese domain. Cysteine 178 (cysteine persulfide intermediate) is an active-site residue.

This sequence belongs to the TrhO family.

It catalyses the reaction uridine(34) in tRNA + AH2 + O2 = 5-hydroxyuridine(34) in tRNA + A + H2O. Functionally, catalyzes oxygen-dependent 5-hydroxyuridine (ho5U) modification at position 34 in tRNAs. This Pseudomonas fluorescens (strain Pf0-1) protein is tRNA uridine(34) hydroxylase.